The chain runs to 416 residues: Deferrochelatase (416 aa).

Residues Met-1–Ala-28 constitute a signal peptide (tat-type signal). Gly-241–Gly-243 contributes to the heme b binding site. Residues Gln-293–Leu-318 are disordered. 2 residues coordinate heme b: His-326 and Arg-339.

It belongs to the DyP-type peroxidase family. As to quaternary structure, component of the iron transporter efeUOB/M complex composed of EfeU, EfeM and EfeB; EfeU is essential for the complex formation. Heme b serves as cofactor. Exported by the Tat system. The position of the signal peptide cleavage has not been experimentally proven.

Its subcellular location is the secreted. It is found in the cell membrane. It carries out the reaction heme b + 2 H(+) = protoporphyrin IX + Fe(2+). The enzyme catalyses 2 Fe(2+) + H2O2 + 2 H(+) = 2 Fe(3+) + 2 H2O. Involved in the recovery of exogenous heme iron. Extracts iron from heme while preserving the protoporphyrin ring intact. Part of the iron transporter system efeUOB/M involved in iron import. Catalyzes the peroxide-mediated oxidation of Fe(2+) into Fe(3+); EfeM binds Fe(3+) and delivers it to the cell membrane permease EfeU. This is Deferrochelatase from Bacillus subtilis (strain 168).